The following is a 257-amino-acid chain: UPF0246 protein YaaA (257 aa).

This sequence belongs to the UPF0246 family.

In Salmonella schwarzengrund (strain CVM19633), this protein is UPF0246 protein YaaA.